We begin with the raw amino-acid sequence, 704 residues long: Elongation factor G (704 aa).

The tr-type G domain occupies 8–291 (DKVRNIGIMA…AVVEYLASPV (284 aa)). GTP-binding positions include 17 to 24 (AHIDAGKT), 90 to 94 (DTPGH), and 144 to 147 (NKMD).

The protein belongs to the TRAFAC class translation factor GTPase superfamily. Classic translation factor GTPase family. EF-G/EF-2 subfamily.

It localises to the cytoplasm. Functionally, catalyzes the GTP-dependent ribosomal translocation step during translation elongation. During this step, the ribosome changes from the pre-translocational (PRE) to the post-translocational (POST) state as the newly formed A-site-bound peptidyl-tRNA and P-site-bound deacylated tRNA move to the P and E sites, respectively. Catalyzes the coordinated movement of the two tRNA molecules, the mRNA and conformational changes in the ribosome. The sequence is that of Elongation factor G from Pelodictyon phaeoclathratiforme (strain DSM 5477 / BU-1).